A 39-amino-acid polypeptide reads, in one-letter code: Photosystem II reaction center protein J (39 aa).

A helical transmembrane segment spans residues 7 to 27 (IPLWLIATVGGTAALTVVGLF).

This sequence belongs to the PsbJ family. PSII is composed of 1 copy each of membrane proteins PsbA, PsbB, PsbC, PsbD, PsbE, PsbF, PsbH, PsbI, PsbJ, PsbK, PsbL, PsbM, PsbT, PsbX, PsbY, PsbZ, Psb30/Ycf12, at least 3 peripheral proteins of the oxygen-evolving complex and a large number of cofactors. It forms dimeric complexes.

The protein resides in the plastid. Its subcellular location is the chloroplast thylakoid membrane. One of the components of the core complex of photosystem II (PSII). PSII is a light-driven water:plastoquinone oxidoreductase that uses light energy to abstract electrons from H(2)O, generating O(2) and a proton gradient subsequently used for ATP formation. It consists of a core antenna complex that captures photons, and an electron transfer chain that converts photonic excitation into a charge separation. This Rhodomonas salina (Cryptomonas salina) protein is Photosystem II reaction center protein J.